A 156-amino-acid chain; its full sequence is Inorganic triphosphatase (156 aa).

Residues 2–148 form the CYTH domain; that stretch reads GKEIEKKFIV…PRYLNSNLVK (147 aa). Tyr-29 serves as the catalytic Proton acceptor.

In terms of assembly, homodimer.

The enzyme catalyses triphosphate + H2O = phosphate + diphosphate. It carries out the reaction ATP + H2O = ADP + phosphate + H(+). Functionally, involved in the hydrolysis of the beta-gamma-phosphoanhydride linkage of triphosphate-containing substrates (inorganic or nucleoside-linked). Catalyzes vigorously the hydrolysis of inorganic triphosphate (PPPi), however it can also catalyze the hydrolysis of ATP to ADP and phosphate. It can use ribonucleotides such as GTP, CTP, or UTP and deoxynucleotides such as dATP, dGTP, dCTP, and dTTP. The sequence is that of Inorganic triphosphatase from Acetivibrio thermocellus (strain ATCC 27405 / DSM 1237 / JCM 9322 / NBRC 103400 / NCIMB 10682 / NRRL B-4536 / VPI 7372) (Clostridium thermocellum).